The primary structure comprises 228 residues: Prolactin-2B1 (228 aa).

A signal peptide spans 1–31 (MLLYLPQIFSSRASSLLFLVPYLLFWENVAS). 2 disulfide bridges follow: cysteine 89/cysteine 194 and cysteine 203/cysteine 228. Asparagine 173 carries N-linked (GlcNAc...) asparagine glycosylation.

This sequence belongs to the somatotropin/prolactin family. Expression restricted to the placenta in trophoblast cells within the labyrinth zone.

The protein localises to the secreted. This chain is Prolactin-2B1 (Prl2b1), found in Rattus norvegicus (Rat).